Consider the following 186-residue polypeptide: MQQNIIKIKVGSKNPVKINAATKAMAQLFPDSIIDASGMDAPSGVAAQPMTDKDTRQGAINRVHYCQQQDQQDTQADYYFAMEGGVDCFDFGPATFAYIAIGHKDQLAIGRSAILPLPMQVYRALEAGEELGHVMDRLFNTVNIKQKGGAIGLLTHGHATRESNYTQAIILAMAPLLNPDIYAQTC.

Residue Gln-75 participates in Mg(2+) binding.

It belongs to the YjjX NTPase family. Homodimer. The cofactor is Mg(2+). It depends on Mn(2+) as a cofactor.

The catalysed reaction is XTP + H2O = XDP + phosphate + H(+). The enzyme catalyses ITP + H2O = IDP + phosphate + H(+). In terms of biological role, phosphatase that hydrolyzes non-canonical purine nucleotides such as XTP and ITP to their respective diphosphate derivatives. Probably excludes non-canonical purines from DNA/RNA precursor pool, thus preventing their incorporation into DNA/RNA and avoiding chromosomal lesions. The polypeptide is Inosine/xanthosine triphosphatase (Shewanella baltica (strain OS185)).